The sequence spans 968 residues: RNA polymerase-associated protein RapA (968 aa).

The region spanning 163–332 (EVGRRFAPRV…FARLRLLDPD (170 aa)) is the Helicase ATP-binding domain. 176 to 183 (DEVGLGKT) provides a ligand contact to ATP. The DEAH box motif lies at 278 to 281 (DEAH). Residues 491-645 (RVDWLIDFLK…TCPSGHILFN (155 aa)) enclose the Helicase C-terminal domain.

It belongs to the SNF2/RAD54 helicase family. RapA subfamily. Interacts with the RNAP. Has a higher affinity for the core RNAP than for the holoenzyme. Its ATPase activity is stimulated by binding to RNAP.

Transcription regulator that activates transcription by stimulating RNA polymerase (RNAP) recycling in case of stress conditions such as supercoiled DNA or high salt concentrations. Probably acts by releasing the RNAP, when it is trapped or immobilized on tightly supercoiled DNA. Does not activate transcription on linear DNA. Probably not involved in DNA repair. The polypeptide is RNA polymerase-associated protein RapA (Shewanella woodyi (strain ATCC 51908 / MS32)).